A 264-amino-acid chain; its full sequence is Small ribosomal subunit protein uS2 (264 aa).

The protein belongs to the universal ribosomal protein uS2 family.

The protein is Small ribosomal subunit protein uS2 of Latilactobacillus sakei subsp. sakei (strain 23K) (Lactobacillus sakei subsp. sakei).